The following is a 398-amino-acid chain: Succinyl-diaminopimelate desuccinylase (398 aa).

His-68 lines the Zn(2+) pocket. Residue Asp-70 is part of the active site. Asp-101 is a binding site for Zn(2+). Glu-135 functions as the Proton acceptor in the catalytic mechanism. Zn(2+)-binding residues include Glu-136, Glu-164, and His-349.

The protein belongs to the peptidase M20A family. DapE subfamily. Homodimer. Zn(2+) serves as cofactor. Co(2+) is required as a cofactor.

The enzyme catalyses N-succinyl-(2S,6S)-2,6-diaminopimelate + H2O = (2S,6S)-2,6-diaminopimelate + succinate. It participates in amino-acid biosynthesis; L-lysine biosynthesis via DAP pathway; LL-2,6-diaminopimelate from (S)-tetrahydrodipicolinate (succinylase route): step 3/3. Its function is as follows. Catalyzes the hydrolysis of N-succinyl-L,L-diaminopimelic acid (SDAP), forming succinate and LL-2,6-diaminopimelate (DAP), an intermediate involved in the bacterial biosynthesis of lysine and meso-diaminopimelic acid, an essential component of bacterial cell walls. The chain is Succinyl-diaminopimelate desuccinylase from Wolbachia pipientis wMel.